The sequence spans 178 residues: Cytidylate kinase (178 aa).

An ATP-binding site is contributed by 7–15 (GLPGTGTTT).

It belongs to the cytidylate kinase family. Type 2 subfamily.

It localises to the cytoplasm. The catalysed reaction is CMP + ATP = CDP + ADP. The enzyme catalyses dCMP + ATP = dCDP + ADP. This Methanococcus maripaludis (strain C5 / ATCC BAA-1333) protein is Cytidylate kinase.